The following is a 1383-amino-acid chain: DNA-directed RNA polymerase subunit beta (1383 aa).

Belongs to the RNA polymerase beta chain family. As to quaternary structure, the RNAP catalytic core consists of 2 alpha, 1 beta, 1 beta' and 1 omega subunit. When a sigma factor is associated with the core the holoenzyme is formed, which can initiate transcription.

The enzyme catalyses RNA(n) + a ribonucleoside 5'-triphosphate = RNA(n+1) + diphosphate. Functionally, DNA-dependent RNA polymerase catalyzes the transcription of DNA into RNA using the four ribonucleoside triphosphates as substrates. This is DNA-directed RNA polymerase subunit beta from Xanthomonas euvesicatoria pv. vesicatoria (strain 85-10) (Xanthomonas campestris pv. vesicatoria).